The chain runs to 282 residues: UDP-3-O-acyl-N-acetylglucosamine deacetylase (282 aa).

Histidine 81, histidine 239, and aspartate 243 together coordinate Zn(2+). Histidine 266 (proton donor) is an active-site residue.

The protein belongs to the LpxC family. Zn(2+) is required as a cofactor.

The enzyme catalyses a UDP-3-O-[(3R)-3-hydroxyacyl]-N-acetyl-alpha-D-glucosamine + H2O = a UDP-3-O-[(3R)-3-hydroxyacyl]-alpha-D-glucosamine + acetate. Its pathway is glycolipid biosynthesis; lipid IV(A) biosynthesis; lipid IV(A) from (3R)-3-hydroxytetradecanoyl-[acyl-carrier-protein] and UDP-N-acetyl-alpha-D-glucosamine: step 2/6. Catalyzes the hydrolysis of UDP-3-O-myristoyl-N-acetylglucosamine to form UDP-3-O-myristoylglucosamine and acetate, the committed step in lipid A biosynthesis. This Chlamydia pneumoniae (Chlamydophila pneumoniae) protein is UDP-3-O-acyl-N-acetylglucosamine deacetylase.